A 147-amino-acid chain; its full sequence is F420H(2)-dependent reductase Rv1155 (147 aa).

Residues glutamine 32, glutamine 37, serine 50, 56-60 (AKTRN), 77-79 (WSY), and histidine 138 contribute to the coenzyme F420-(gamma-Glu)n site.

Belongs to the F420H(2)-dependent biliverdin reductase family. In terms of assembly, homodimer.

F420H(2)-dependent reductase able to catalyze the reduction of biliverdin-IXalpha to bilirubin-IXalpha in vitro. However, kinetic parameters show that it is less efficient than the biliverdin reductase Rv2074 and suggest biliverdin-IXalpha is unlikely to be the native substrate of Rv1155, which probably catalyzes the reduction of an alternative molecule in vivo. Binds coenzyme F420, but does not bind FMN or other flavins. Cannot use pyridoxine 5'-phosphate, pyridoxamine 5'-phosphate, pyridoxal 5'-phosphate (PLP), the anti-tuberculosis drug PA-824 or aflatoxin analogs as substrates. The protein is F420H(2)-dependent reductase Rv1155 of Mycobacterium tuberculosis (strain ATCC 25618 / H37Rv).